Here is a 30-residue protein sequence, read N- to C-terminus: Kalata-B10 (30 aa).

A cross-link (cyclopeptide (Gly-Asp)) is located at residues glycine 1 to aspartate 30. 3 cysteine pairs are disulfide-bonded: cysteine 5/cysteine 19, cysteine 9/cysteine 21, and cysteine 14/cysteine 27.

This sequence belongs to the cyclotide family. Moebius subfamily. In terms of processing, this peptide occurs in both cyclic and linear forms. The linear form contains unmodified Trp-24, the cyclic peptide occurs in two forms with unmodified Trp-24, and with Trp-24 oxidized to form oxindolylalanine. Oxidation is enhanced by exposure to sunlight.

In terms of biological role, probably participates in a plant defense mechanism. The polypeptide is Kalata-B10 (Oldenlandia affinis).